Reading from the N-terminus, the 342-residue chain is Polygalacturonase inhibitor 2 (342 aa).

The N-terminal stretch at 1-29 is a signal peptide; sequence MTQFNIPVTMSSSLSIILVILVSLSTAHS. Cystine bridges form between cysteine 32-cysteine 62 and cysteine 63-cysteine 72. Residue asparagine 64 is glycosylated (N-linked (GlcNAc...) (complex) asparagine). LRR repeat units lie at residues 82 to 107, 108 to 132, 133 to 156, 157 to 180, 181 to 205, 206 to 228, 229 to 252, 253 to 275, 276 to 299, and 300 to 319; these read NNLDLSGLNLPKPYPIPSSLANLPYL, NFLYIGGINNLVGPIPPAIAKLTQL, HYLYITHTNVSGAIPDFLSQIKTL, VTLDFSYNALSGTLPPSISSLPNL, VGITFDGNRISGAIPDSYGSFSKLF, TSMTISRNRLTGKIPPTFANLNL, AFVDLSRNMLEGDASVLFGSDKNT, QKIHLAKNSLAFDLGKVGLSKNL, NGLDLRNNRIYGTLPQGLTQLKFL, and HSLNVSFNNLCGEIPQGGNL. An N-linked (GlcNAc...) (complex) asparagine glycan is attached at asparagine 141. Residue asparagine 303 is glycosylated (N-linked (GlcNAc...) asparagine). 2 disulfides stabilise this stretch: cysteine 310–cysteine 332 and cysteine 334–cysteine 341.

Belongs to the polygalacturonase-inhibiting protein family. In terms of processing, asn-303 is not glycosylated.

Its subcellular location is the secreted. The protein resides in the cell wall. It localises to the membrane. Inhibitor of fungal polygalacturonase. It is an important factor for plant resistance to phytopathogenic fungi. Inhibits all polygalacturonases (PG) tested, with the exception of PG from F.oxysporum which was only inhibited at 60%. The polypeptide is Polygalacturonase inhibitor 2 (PGIP2) (Phaseolus vulgaris (Kidney bean)).